We begin with the raw amino-acid sequence, 519 residues long: Ribonuclease Y (519 aa).

The helical transmembrane segment at 3 to 23 (PLAILISILLSLFCLVVGYYV) threads the bilayer. In terms of domain architecture, KH spans 209-272 (TVSVVNLPND…ETARIALDKL (64 aa)). The HD domain occupies 335-428 (VLKHSMEVAF…VAAADALSAA (94 aa)).

The protein belongs to the RNase Y family.

It localises to the cell membrane. Endoribonuclease that initiates mRNA decay. The chain is Ribonuclease Y from Bacillus licheniformis (strain ATCC 14580 / DSM 13 / JCM 2505 / CCUG 7422 / NBRC 12200 / NCIMB 9375 / NCTC 10341 / NRRL NRS-1264 / Gibson 46).